We begin with the raw amino-acid sequence, 283 residues long: Phosphate import ATP-binding protein PstB 1 (283 aa).

A compositionally biased stretch (acidic residues) spans Met1 to Phe16. The segment at Met1–Arg35 is disordered. Residues Ile38–Ile278 form the ABC transporter domain. Gly70–Ser77 is a binding site for ATP.

Belongs to the ABC transporter superfamily. Phosphate importer (TC 3.A.1.7) family. The complex is composed of two ATP-binding proteins (PstB), two transmembrane proteins (PstC and PstA) and a solute-binding protein (PstS).

It is found in the cell membrane. It carries out the reaction phosphate(out) + ATP + H2O = ADP + 2 phosphate(in) + H(+). Its function is as follows. Part of the ABC transporter complex PstSACB involved in phosphate import. Responsible for energy coupling to the transport system. This Natronomonas pharaonis (strain ATCC 35678 / DSM 2160 / CIP 103997 / JCM 8858 / NBRC 14720 / NCIMB 2260 / Gabara) (Halobacterium pharaonis) protein is Phosphate import ATP-binding protein PstB 1.